Consider the following 69-residue polypeptide: Protein SlyX homolog (69 aa).

This sequence belongs to the SlyX family.

The polypeptide is Protein SlyX homolog (Pseudomonas paraeruginosa (strain DSM 24068 / PA7) (Pseudomonas aeruginosa (strain PA7))).